The sequence spans 244 residues: uncharacterized protein (244 aa).

A WGR domain is found at 1 to 78; the sequence is MKKRFIYHDE…PKFNFMDRYY (78 aa).

This is an uncharacterized protein from Escherichia coli (strain K12).